We begin with the raw amino-acid sequence, 204 residues long: Molybdenum cofactor guanylyltransferase (204 aa).

Residues 12-14 (LAG), lysine 25, asparagine 53, aspartate 71, and aspartate 101 contribute to the GTP site. Residue aspartate 101 participates in Mg(2+) binding.

The protein belongs to the MobA family. Monomer. Mg(2+) is required as a cofactor.

It is found in the cytoplasm. The enzyme catalyses Mo-molybdopterin + GTP + H(+) = Mo-molybdopterin guanine dinucleotide + diphosphate. In terms of biological role, transfers a GMP moiety from GTP to Mo-molybdopterin (Mo-MPT) cofactor (Moco or molybdenum cofactor) to form Mo-molybdopterin guanine dinucleotide (Mo-MGD) cofactor. The protein is Molybdenum cofactor guanylyltransferase of Ralstonia nicotianae (strain ATCC BAA-1114 / GMI1000) (Ralstonia solanacearum).